Consider the following 107-residue polypeptide: Large ribosomal subunit protein P2-A (107 aa).

The interval 85–107 (GAAAPAAAAEEEEDDDMGFGLFD) is disordered.

Belongs to the eukaryotic ribosomal protein P1/P2 family. As to quaternary structure, P1 and P2 exist as dimers at the large ribosomal subunit. In terms of processing, phosphorylated.

Plays an important role in the elongation step of protein synthesis. This is Large ribosomal subunit protein P2-A from Trypanosoma cruzi.